Consider the following 748-residue polypeptide: Malate synthase G (748 aa).

Residues V141, 148 to 149 (RF), S298, and R335 contribute to the acetyl-CoA site. R362 acts as the Proton acceptor in catalysis. Glyoxylate is bound by residues R362, E453, and 478–481 (GFLD). Residues E453 and D481 each contribute to the Mg(2+) site. P562 serves as a coordination point for acetyl-CoA. A Cysteine sulfenic acid (-SOH) modification is found at C639. D653 functions as the Proton donor in the catalytic mechanism.

The protein belongs to the malate synthase family. GlcB subfamily. As to quaternary structure, monomer. It depends on Mg(2+) as a cofactor.

It localises to the cytoplasm. The catalysed reaction is glyoxylate + acetyl-CoA + H2O = (S)-malate + CoA + H(+). Its pathway is carbohydrate metabolism; glyoxylate cycle; (S)-malate from isocitrate: step 2/2. Involved in the glycolate utilization. Catalyzes the condensation and subsequent hydrolysis of acetyl-coenzyme A (acetyl-CoA) and glyoxylate to form malate and CoA. This chain is Malate synthase G, found in Corynebacterium efficiens (strain DSM 44549 / YS-314 / AJ 12310 / JCM 11189 / NBRC 100395).